A 99-amino-acid chain; its full sequence is C-C motif chemokine 17 (99 aa).

Residues 1–23 (MMSLKLLLLVMLLLGASLQVTHA) form the signal peptide. Cystine bridges form between Cys33–Cys57 and Cys34–Cys73.

It belongs to the intercrine beta (chemokine CC) family. In terms of tissue distribution, expressed in thymus and also in spleen, lung, lymph node, kidney, small intestine, colon and skin.

It localises to the secreted. In terms of biological role, chemokine, which displays chemotactic activity for T lymphocytes, preferentially Th2 cells, but not monocytes or granulocytes. Therefore plays an important role in a wide range of inflammatory and immunological processes. Acts by binding to CCR4 at T-cell surface. Mediates GM-CSF/CSF2-driven pain and inflammation. In the brain, required to maintain the typical, highly branched morphology of hippocampal microglia under homeostatic conditions. May be important for the appropriate adaptation of microglial morphology and synaptic plasticity to acute lipopolysaccharide (LPS)-induced neuroinflammation. Plays a role in wound healing, mainly by inducing fibroblast migration into the wound. In Felis catus (Cat), this protein is C-C motif chemokine 17 (CCL17).